The primary structure comprises 160 residues: Eosinophil cationic protein (160 aa).

A signal peptide spans 1-27; the sequence is MVPKLFTSQICLLLLLGLMGVEGSLHA. The segment at 28–72 is required for nearly all of the bactericidal activity; partially involved in LPS-binding and bacterial membrane depolarization; that stretch reads RPPQFTRAQWFAIQHISLNPPRCTIAMRAINNYRWRCKNQNTFLR. The active-site Proton acceptor is histidine 42. 4 disulfides stabilise this stretch: cysteine 50–cysteine 110, cysteine 64–cysteine 123, cysteine 82–cysteine 138, and cysteine 89–cysteine 98. Tyrosine 60 carries the 3'-nitrotyrosine modification. Residue 65 to 69 coordinates substrate; sequence KNQNT. N-linked (GlcNAc...) asparagine glycans are attached at residues asparagine 84, asparagine 92, and asparagine 119. The active-site Proton donor is the histidine 155.

The protein belongs to the pancreatic ribonuclease family. As to quaternary structure, interacts with bacterial lipopolysaccharide (LPS) and lipoteichoic acid (LTA). In vitro interacts with and insert into lipid bilayers composed of dioleoyl phosphatidylcholine and dioleoyl phosphatidylglycerol. In vitro, tends to form amyloid-like aggregates at pH 3, but not at pH 5, nor 7.

Its subcellular location is the secreted. Cytotoxin and helminthotoxin with low-efficiency ribonuclease activity. Possesses a wide variety of biological activities. Exhibits antibacterial activity, including cytoplasmic membrane depolarization of preferentially Gram-negative, but also Gram-positive strains. Promotes E.coli outer membrane detachment, alteration of the overall cell shape and partial loss of cell content. The chain is Eosinophil cationic protein (RNASE3) from Homo sapiens (Human).